The primary structure comprises 236 residues: Aminopyrimidine aminohydrolase (236 aa).

Aspartate 44 contacts substrate. Catalysis depends on cysteine 135, which acts as the Nucleophile. Residues tyrosine 139 and tyrosine 163 each coordinate substrate. Glutamate 205 serves as the catalytic Proton donor.

The protein belongs to the TenA family. As to quaternary structure, homotetramer.

It catalyses the reaction 4-amino-5-aminomethyl-2-methylpyrimidine + H2O = 4-amino-5-hydroxymethyl-2-methylpyrimidine + NH4(+). It carries out the reaction thiamine + H2O = 5-(2-hydroxyethyl)-4-methylthiazole + 4-amino-5-hydroxymethyl-2-methylpyrimidine + H(+). It participates in cofactor biosynthesis; thiamine diphosphate biosynthesis. Functionally, catalyzes an amino-pyrimidine hydrolysis reaction at the C5' of the pyrimidine moiety of thiamine compounds, a reaction that is part of a thiamine salvage pathway. Thus, catalyzes the conversion of 4-amino-5-aminomethyl-2-methylpyrimidine to 4-amino-5-hydroxymethyl-2-methylpyrimidine (HMP). To a lesser extent, is also able to catalyze the hydrolytic cleavage of thiamine; however, this thiaminase activity is unlikely to be physiologically relevant. Therefore, is involved in the regeneration of the thiamine pyrimidine from thiamine degraded products present in the environment, rather than in thiamine degradation. This is Aminopyrimidine aminohydrolase from Bacillus subtilis (strain 168).